The following is a 997-amino-acid chain: MKYATGTDNAMTSGISGQTNNSNSASTEMQPTTSTPTAVHKEATPTATTTATYANGNPNPNANPSQSQPSNALFCEQVTTVTNLFEKWNDCERTVVMYALLKRLRYPSLKFLQYSIDSNLTQNLGTSQTNLSSVVIDINANNPVYLQNLLNAYKTFQPCDLLDAMSSSSSDKDSMPCYGSDFQITTSAQCDERKLYARKEDILHEVLNMLPLLKPGNEEAKLIYLTLIPVAVKDTMQQIVPTELVQQIFSYLLIHPAITSEDRRALNIWLRHLEDHIQAAAAGLTNRSYFLQPSPQLVAGGSSTGSGSCSSSATSSSTASCSSVASSSLCPASGSRSSRTNDWQTIAPPSKQLQNKLAGDWRGSGGGSSSGSINPLCDNLNGITLNELASSQNSLGLSLEGSSSLVNGVVAGAGSMLGIGGGDDHDTSFSKNGTEILDFDPVTADMGEACSLASSSLCGRNGGNPVEDRSQPPPNLQQQMLQPPPYASILMGNVGDQFGEINRWSLDSKIAALKTRRSNSLTTQTISSCSSSSNSSVITVNDNCSNSTENLAQFANKPRSFSLSIEHQRGALINSGSDTRLDEFKPNYIKFHTRNVGMSGIGLWLKSLRLHKYIELFKNMTYEEMLLITEDFLQSVGVTKGASHKLALCIEKLKERANILNRVEQELLTGQMELSTAVEELTNIVLTPMKPLESPGPPEENIGLRFLKVIDIVTNTLQQDPYAAQDDETLGVLMWILDRSIHNEAFMNHASQLKDLKFKLSKMKISMVPKMHHVKPAGVGPNNGNINKPRWNGKTRKCDPKNGSNDRINNRKNSNDMLNFSLNCLPHPLPHHSQQPPPPLPQFDYNGYGGGPSHQPQYKSSSYPSFMGNPQQQPPPPPPTKSHHHAQQMQQMLQQHNHFPALPQQTPPQSHRRSLNNLILVAGGPQQPQQLIFKPGQGVLTNNGSSDNLGLERNQQPQQQQRKLSGGVTSAEQQPKKTMAAVVMENLAKFDQHFTLF.

Residues M1–T37 show a composition bias toward polar residues. 2 disordered regions span residues M1–P69 and L329–S370. 2 stretches are compositionally biased toward low complexity: residues T44–P69 and L329–S338. Phosphoserine is present on residues S564 and S575. Residues E583–M763 are interaction with cup. The SAM domain occupies G600 to K654. 2 disordered regions span residues H773–M892 and G944–E972. Composition is skewed to polar residues over residues N802 to L822 and H854 to P864. Phosphoserine is present on S970.

It belongs to the SMAUG family. In terms of assembly, interacts with oskar (osk). Binds to the 3'-UTR of nos. Interacts with cup, which in turn recruits eIF4-E, leading to an indirect interaction between smg and eIF4-E that prevents mRNA translation.

Its subcellular location is the cytoplasm. Translation regulator that binds to the 3'-UTR of specific mRNAs such as nanos (nos) and prevent their translation. Prevents translation of unlocalized nos in the bulk cytoplasm via the recruitment of cup. The polypeptide is Protein Smaug (Drosophila erecta (Fruit fly)).